A 715-amino-acid chain; its full sequence is ATP-dependent RecD2 DNA helicase (715 aa).

Residues 1-150 form a not required for helicase activity region; the sequence is MSAALPAEPF…STLHKMVSSW (150 aa). ATP contacts are provided by residues Gln343 and 363–367; that span reads GTGKS. 2 consecutive DNA-binding regions follow at residues Gly391 and 407 to 414; that span reads TVHRLLGY. Gln466 is an ATP binding site. Residue Val470 is a DNA-binding region. Arg493 contacts ATP. 3 consecutive DNA-binding regions follow at residues 554 to 555, 596 to 604, and 644 to 647; these read RK, NDYNNEIFN, and TVHR. An ATP-binding site is contributed by Arg679.

The protein belongs to the RecD family. RecD2 subfamily. In terms of assembly, monomer; homodimers seem to be inactive.

It carries out the reaction Couples ATP hydrolysis with the unwinding of duplex DNA at the replication fork by translocating in the 5'-3' direction. This creates two antiparallel DNA single strands (ssDNA). The leading ssDNA polymer is the template for DNA polymerase III holoenzyme which synthesizes a continuous strand.. The enzyme catalyses ATP + H2O = ADP + phosphate + H(+). In terms of biological role, DNA-dependent ATPase (ssDNA stimulates the ATPase better than dsDNA) and ATP-dependent 5'-3' DNA helicase. Plays a role in an antioxidant pathway. Involved in DNA damage repair and/or recombination. Appears to move along DNA in single base steps, powered by hydrolysis of 1 molecule of ATP. Has low processivity, unwinds about 15-20 base pairs/second. Short (20 bp) substrates with 5'-overhangs or forked ends are the best substrates, is much less efficient on 52 or 76 bp substrates with 5'-overhangs. The presence of single-stranded DNA-binding protein (SSB) increases unwinding 4-5 fold. Has no activity on blunt DNA or DNA with 3'-overhangs. Requires at least 10 bases of 5'-ssDNA for helicase activity. The sequence is that of ATP-dependent RecD2 DNA helicase from Deinococcus radiodurans (strain ATCC 13939 / DSM 20539 / JCM 16871 / CCUG 27074 / LMG 4051 / NBRC 15346 / NCIMB 9279 / VKM B-1422 / R1).